A 510-amino-acid chain; its full sequence is NAD(P)H-quinone oxidoreductase subunit 2 A, chloroplastic (510 aa).

13 helical membrane passes run 24-44 (LLLF…GLIL), 59-79 (WFYF…LFRW), 99-119 (IFQF…VEYI), 124-144 (MAIT…MFLC), 149-169 (LITI…LSGY), 183-203 (YLLM…WLYG), 229-249 (ISIA…PAPF), 295-315 (WHLL…LIAI), 323-343 (MLAY…IVGD), 347-367 (GYAS…GTFA), 395-415 (ALSS…AGFF), 418-438 (LHLF…IGLL), and 484-504 (MIVC…IIAI).

This sequence belongs to the complex I subunit 2 family. In terms of assembly, NDH is composed of at least 16 different subunits, 5 of which are encoded in the nucleus.

It is found in the plastid. It localises to the chloroplast thylakoid membrane. The catalysed reaction is a plastoquinone + NADH + (n+1) H(+)(in) = a plastoquinol + NAD(+) + n H(+)(out). The enzyme catalyses a plastoquinone + NADPH + (n+1) H(+)(in) = a plastoquinol + NADP(+) + n H(+)(out). In terms of biological role, NDH shuttles electrons from NAD(P)H:plastoquinone, via FMN and iron-sulfur (Fe-S) centers, to quinones in the photosynthetic chain and possibly in a chloroplast respiratory chain. The immediate electron acceptor for the enzyme in this species is believed to be plastoquinone. Couples the redox reaction to proton translocation, and thus conserves the redox energy in a proton gradient. The polypeptide is NAD(P)H-quinone oxidoreductase subunit 2 A, chloroplastic (Amborella trichopoda).